Here is a 116-residue protein sequence, read N- to C-terminus: Immunoglobulin heavy variable 2-4 (116 aa).

Positions 1 to 19 (MAVLVLLFCLVTFPSCVLS) are cleaved as a signal peptide. The Ig-like domain occupies 20 to 116 (QVQLKQSGPG…DDTAIYYCAK (97 aa)). A disulfide bridge connects residues C41 and C114.

The polypeptide is Immunoglobulin heavy variable 2-4 (Mus musculus (Mouse)).